Reading from the N-terminus, the 368-residue chain is Glutamate 5-kinase (368 aa).

Position 9 (Lys9) interacts with ATP. Residues Ser49, Asp136, and Asn148 each coordinate substrate. ATP is bound by residues Thr168 to Asp169 and Thr210 to Lys216. The PUA domain maps to Ala275–Glu353.

This sequence belongs to the glutamate 5-kinase family.

It localises to the cytoplasm. It catalyses the reaction L-glutamate + ATP = L-glutamyl 5-phosphate + ADP. It functions in the pathway amino-acid biosynthesis; L-proline biosynthesis; L-glutamate 5-semialdehyde from L-glutamate: step 1/2. In terms of biological role, catalyzes the transfer of a phosphate group to glutamate to form L-glutamate 5-phosphate. The protein is Glutamate 5-kinase of Haemophilus influenzae (strain ATCC 51907 / DSM 11121 / KW20 / Rd).